A 517-amino-acid chain; its full sequence is Crotonobetaine/carnitine--CoA ligase (517 aa).

The protein belongs to the ATP-dependent AMP-binding enzyme family.

It carries out the reaction 4-(trimethylamino)butanoate + ATP + CoA = 4-(trimethylamino)butanoyl-CoA + AMP + diphosphate. The enzyme catalyses crotonobetaine + ATP + CoA = crotonobetainyl-CoA + AMP + diphosphate. The catalysed reaction is (R)-carnitine + ATP + CoA = (R)-carnitinyl-CoA + AMP + diphosphate. It participates in amine and polyamine metabolism; carnitine metabolism. Its function is as follows. Catalyzes the transfer of CoA to carnitine, generating the initial carnitinyl-CoA needed for the CaiB reaction cycle. Also has activity toward crotonobetaine and gamma-butyrobetaine. This chain is Crotonobetaine/carnitine--CoA ligase, found in Escherichia coli O8 (strain IAI1).